Reading from the N-terminus, the 266-residue chain is Small ribosomal subunit protein uS3m (266 aa).

This sequence belongs to the universal ribosomal protein uS3 family.

It localises to the mitochondrion. The sequence is that of Small ribosomal subunit protein uS3m (MRPS3) from Mycosarcoma maydis (Corn smut fungus).